The following is a 786-amino-acid chain: Diamine oxidase [copper-containing] 1, peroxisomal (786 aa).

419–430 (AFDAGEDGLGKN) serves as a coordination point for substrate. Asp421 acts as the Proton acceptor in catalysis. An intrachain disulfide couples Cys440 to Cys466. 502–507 (VANYEY) provides a ligand contact to substrate. Tyr505 serves as the catalytic Schiff-base intermediate with substrate; via topaquinone. Tyr505 carries the 2',4',5'-topaquinone modification. His555 and His557 together coordinate Cu cation. Mn(2+) contacts are provided by Asp710 and Ile711. His721 is a binding site for Cu cation.

It belongs to the copper/topaquinone oxidase family. As to quaternary structure, homodimer. It depends on Cu cation as a cofactor. Zn(2+) serves as cofactor. L-topaquinone is required as a cofactor. Topaquinone (TPQ) is generated by copper-dependent autoxidation of a specific tyrosyl residue. In terms of tissue distribution, mainly expressed in roots, and, to a lower extent, in leaves and stems.

It localises to the peroxisome. It carries out the reaction a primary methyl amine + O2 + H2O = an aldehyde + H2O2 + NH4(+). The enzyme catalyses N-methylputrescine + O2 + H2O = 4-methylaminobutanal + H2O2 + NH4(+). The protein operates within alkaloid biosynthesis; nicotine biosynthesis. It functions in the pathway amine and polyamine degradation; putrescine degradation. Involved in putrescine catabolism in peroxisomes. May also be involved in the biosynthesis of pyridine alkaloid natural products, leading mainly to the production of anabasine, anatabine, nicotine and nornicotine, effective deterrents against herbivores with antiparasitic and pesticide properties (neurotoxins); nornicotine serves as the precursor in the synthesis of the carcinogen compound N'-nitrosonornicotine (NNN). Oxidizes preferentially non-N-methylated amines. This Nicotiana tabacum (Common tobacco) protein is Diamine oxidase [copper-containing] 1, peroxisomal.